The following is a 184-amino-acid chain: GTPase RhebL1 (184 aa).

Residues 16–21 (SVGKTS), 32–38 (LEGYDPT), G63, 119–122 (NKAD), and 149–150 (SA) contribute to the GTP site. The short motif at 35-43 (YDPTVENTY) is the Effector region element. T38 lines the Mg(2+) pocket. C181 is modified (cysteine methyl ester). C181 is lipidated: S-farnesyl cysteine. The propeptide at 182–184 (YLM) is removed in mature form.

This sequence belongs to the small GTPase superfamily. Rheb family. In terms of assembly, interacts with MTOR.

Its subcellular location is the endomembrane system. It localises to the cytoplasm. The enzyme catalyses GTP + H2O = GDP + phosphate + H(+). Functionally, binds GTP and exhibits intrinsic GTPase activity. May activate NF-kappa-B-mediated gene transcription. Promotes signal transduction through MTOR, activates RPS6KB1, and is a downstream target of the small GTPase-activating proteins TSC1 and TSC2. The polypeptide is GTPase RhebL1 (Rhebl1) (Mus musculus (Mouse)).